Reading from the N-terminus, the 335-residue chain is Large ribosomal subunit protein uL3 (335 aa).

Positions 1 to 20 are disordered; sequence MATIHRPRRGSLAFSPRKRA.

This sequence belongs to the universal ribosomal protein uL3 family. In terms of assembly, part of the 50S ribosomal subunit. Forms a cluster with proteins L14 and L24e.

Functionally, one of the primary rRNA binding proteins, it binds directly near the 3'-end of the 23S rRNA, where it nucleates assembly of the 50S subunit. The polypeptide is Large ribosomal subunit protein uL3 (Methanothrix thermoacetophila (strain DSM 6194 / JCM 14653 / NBRC 101360 / PT) (Methanosaeta thermophila)).